The primary structure comprises 70 residues: Conotoxin ba3a (70 aa).

Positions M1–L20 are cleaved as a signal peptide. A propeptide spanning residues Q21–R55 is cleaved from the precursor.

Expressed by the venom duct.

The protein resides in the secreted. This Conus bayani (Bayan's cone) protein is Conotoxin ba3a.